Reading from the N-terminus, the 646-residue chain is Serine/threonine-protein kinase sck2 (646 aa).

2 disordered regions span residues 17–85 (VSTN…LPEV) and 143–176 (GRDIGTSSRDSANVSRSSSMMSSHPIPTPAIQRT). Over residues 68-80 (SDQSTVGNRNSND) the composition is skewed to polar residues. The segment covering 149-165 (SSRDSANVSRSSSMMSS) has biased composition (low complexity). The Protein kinase domain occupies 266-527 (FVPLKLIGKG…VEEVMKHPFF (262 aa)). ATP is bound by residues 272 to 280 (IGKGTFGQV) and Lys295. The active-site Proton acceptor is the Asp392. Positions 528-605 (DGIDWKKLAA…IDASAMDEAF (78 aa)) constitute an AGC-kinase C-terminal domain. The interval 609–646 (NSNDSASSISSQDDYSKDNSDMDLNRANDEVFMGQIDP) is disordered. Over residues 610-621 (SNDSASSISSQD) the composition is skewed to low complexity. Over residues 622-637 (DYSKDNSDMDLNRAND) the composition is skewed to basic and acidic residues.

This sequence belongs to the protein kinase superfamily. AGC Ser/Thr protein kinase family. PKC subfamily.

The enzyme catalyses L-seryl-[protein] + ATP = O-phospho-L-seryl-[protein] + ADP + H(+). It catalyses the reaction L-threonyl-[protein] + ATP = O-phospho-L-threonyl-[protein] + ADP + H(+). Its function is as follows. Protein kinase that is part of growth control pathway which is at least partially redundant with the cAMP pathway. The sequence is that of Serine/threonine-protein kinase sck2 (sck2) from Schizosaccharomyces pombe (strain 972 / ATCC 24843) (Fission yeast).